We begin with the raw amino-acid sequence, 175 residues long: Ribosome-binding factor A (175 aa).

Residues 131-175 are disordered; that stretch reads KPAGEADPYRDRGSVDEPSDAGGLVIRTSDGLEAENTGDDYQAED. Positions 162–175 are enriched in acidic residues; that stretch reads LEAENTGDDYQAED.

The protein belongs to the RbfA family. Monomer. Binds 30S ribosomal subunits, but not 50S ribosomal subunits or 70S ribosomes.

It is found in the cytoplasm. Its function is as follows. One of several proteins that assist in the late maturation steps of the functional core of the 30S ribosomal subunit. Associates with free 30S ribosomal subunits (but not with 30S subunits that are part of 70S ribosomes or polysomes). Required for efficient processing of 16S rRNA. May interact with the 5'-terminal helix region of 16S rRNA. This chain is Ribosome-binding factor A, found in Mycobacterium ulcerans (strain Agy99).